A 221-amino-acid chain; its full sequence is CASP-like protein 4B1 (221 aa).

The tract at residues 1–78 (MAMQLHAASP…HDHHGGGGGG (78 aa)) is disordered. The Cytoplasmic segment spans residues 1–87 (MAMQLHAASP…GDEATQLLNG (87 aa)). The span at 19–33 (SPPPPPPLSPHPEPA) shows a compositional bias: pro residues. The span at 50–62 (APVATATTPLTPG) shows a compositional bias: low complexity. Residues 88–108 (IVLVLRAGAALLSFVAMALVA) traverse the membrane as a helical segment. At 109–125 (SCRHGDWMDFLRYQEYR) the chain is on the extracellular side. The helical transmembrane segment at 126–146 (YLLGVSVVAFVYSAAQALKNF) threads the bilayer. At 147–160 (RRRRRGAADASFLD) the chain is on the cytoplasmic side. A helical membrane pass occupies residues 161–181 (FAGDQAVAYLLVTASAAALPI). Residues 182-196 (TIRMRSAVVNVFTDA) lie on the Extracellular side of the membrane. A helical membrane pass occupies residues 197 to 217 (IAASIALGFLAFAALALSAML). The Cytoplasmic segment spans residues 218-221 (SRHA).

Belongs to the Casparian strip membrane proteins (CASP) family. Homodimer and heterodimers.

The protein localises to the cell membrane. The polypeptide is CASP-like protein 4B1 (Hordeum vulgare subsp. vulgare (Domesticated barley)).